Consider the following 61-residue polypeptide: Large ribosomal subunit protein bL32 (61 aa).

Residues 1 to 18 are compositionally biased toward basic residues; that stretch reads MAIVPKRKTSKQRKRKRQ. Residues 1–20 form a disordered region; sequence MAIVPKRKTSKQRKRKRQTH.

This sequence belongs to the bacterial ribosomal protein bL32 family.

This chain is Large ribosomal subunit protein bL32 (rpmF), found in Mycoplasmopsis pulmonis (strain UAB CTIP) (Mycoplasma pulmonis).